Consider the following 124-residue polypeptide: UPF0102 protein HEAR0176 (124 aa).

It belongs to the UPF0102 family.

This is UPF0102 protein HEAR0176 from Herminiimonas arsenicoxydans.